Reading from the N-terminus, the 188-residue chain is MSLERIVERLETEKRTKIEEIKNKKEKEFQEFVAKKEKELEEWKEKQKRSLKEKLNREENTLAAQLKLKYNAEKLRIESDAIAKVKNLVLERLKSSSNEVYNKIWENLLERESIKSGEMILTKNEDKIDVDYFCKKYSLTLSKDRMEGNGGFVIQKDNLVIDLTVDTIIEELVNKNILEIAQILHGER.

The protein belongs to the V-ATPase E subunit family.

Produces ATP from ADP in the presence of a proton gradient across the membrane. The chain is V-type proton ATPase subunit E from Dictyoglomus thermophilum (strain ATCC 35947 / DSM 3960 / H-6-12).